Reading from the N-terminus, the 341-residue chain is Phosphate acyltransferase (341 aa).

Belongs to the PlsX family. As to quaternary structure, homodimer. Probably interacts with PlsY.

It is found in the cytoplasm. It catalyses the reaction a fatty acyl-[ACP] + phosphate = an acyl phosphate + holo-[ACP]. It participates in lipid metabolism; phospholipid metabolism. Its function is as follows. Catalyzes the reversible formation of acyl-phosphate (acyl-PO(4)) from acyl-[acyl-carrier-protein] (acyl-ACP). This enzyme utilizes acyl-ACP as fatty acyl donor, but not acyl-CoA. The sequence is that of Phosphate acyltransferase from Vibrio atlanticus (strain LGP32) (Vibrio splendidus (strain Mel32)).